We begin with the raw amino-acid sequence, 498 residues long: Glycerol kinase (498 aa).

Thr-12 is a binding site for ADP. Thr-12, Thr-13, and Ser-14 together coordinate ATP. Sn-glycerol 3-phosphate is bound at residue Thr-12. Arg-16 lines the ADP pocket. Residues Arg-82, Glu-83, Tyr-134, and Asp-243 each contribute to the sn-glycerol 3-phosphate site. Glycerol-binding residues include Arg-82, Glu-83, Tyr-134, Asp-243, and Gln-244. ADP contacts are provided by Thr-265 and Gly-308. ATP-binding residues include Thr-265, Gly-308, Gln-312, and Gly-409. ADP-binding residues include Gly-409 and Asn-413.

It belongs to the FGGY kinase family. Homotetramer and homodimer (in equilibrium).

The catalysed reaction is glycerol + ATP = sn-glycerol 3-phosphate + ADP + H(+). It functions in the pathway polyol metabolism; glycerol degradation via glycerol kinase pathway; sn-glycerol 3-phosphate from glycerol: step 1/1. Activated by phosphorylation and inhibited by fructose 1,6-bisphosphate (FBP). Its function is as follows. Key enzyme in the regulation of glycerol uptake and metabolism. Catalyzes the phosphorylation of glycerol to yield sn-glycerol 3-phosphate. The chain is Glycerol kinase from Clostridium botulinum (strain 657 / Type Ba4).